Here is a 465-residue protein sequence, read N- to C-terminus: UDP-N-acetylmuramate--L-alanine ligase (465 aa).

Residue 115-121 (GAHGKTT) participates in ATP binding.

The protein belongs to the MurCDEF family.

The protein localises to the cytoplasm. It catalyses the reaction UDP-N-acetyl-alpha-D-muramate + L-alanine + ATP = UDP-N-acetyl-alpha-D-muramoyl-L-alanine + ADP + phosphate + H(+). The protein operates within cell wall biogenesis; peptidoglycan biosynthesis. Functionally, cell wall formation. This chain is UDP-N-acetylmuramate--L-alanine ligase, found in Coxiella burnetii (strain CbuG_Q212) (Coxiella burnetii (strain Q212)).